The primary structure comprises 156 residues: Sec-independent protein translocase protein TatB (156 aa).

A helical membrane pass occupies residues 2–22 (FSSVGWGEIFLLVVVGLVVIG). A disordered region spans residues 100–156 (KIMAEGTEGEAQRNKQAADNNANVVERPADGSTARPTQNDPKDGPNYSGGVSWTDII). Polar residues predominate over residues 113–122 (NKQAADNNAN).

This sequence belongs to the TatB family. The Tat system comprises two distinct complexes: a TatABC complex, containing multiple copies of TatA, TatB and TatC subunits, and a separate TatA complex, containing only TatA subunits. Substrates initially bind to the TatABC complex, which probably triggers association of the separate TatA complex to form the active translocon.

The protein localises to the cell membrane. Part of the twin-arginine translocation (Tat) system that transports large folded proteins containing a characteristic twin-arginine motif in their signal peptide across membranes. Together with TatC, TatB is part of a receptor directly interacting with Tat signal peptides. TatB may form an oligomeric binding site that transiently accommodates folded Tat precursor proteins before their translocation. This is Sec-independent protein translocase protein TatB from Corynebacterium glutamicum (strain ATCC 13032 / DSM 20300 / JCM 1318 / BCRC 11384 / CCUG 27702 / LMG 3730 / NBRC 12168 / NCIMB 10025 / NRRL B-2784 / 534).